The following is an 837-amino-acid chain: V-type proton ATPase 116 kDa subunit a 1 (837 aa).

The Cytoplasmic portion of the chain corresponds to 1–388; that stretch reads MGELFRSEEM…DAYGIGSYRE (388 aa). Residues 389 to 407 traverse the membrane as a helical segment; it reads INPAPYTIITFPFLFAVMF. The Vacuolar segment spans residues 408–409; the sequence is GD. A helical membrane pass occupies residues 410-426; sequence FGHGILMTLFAVWMVVR. Residues 427–441 lie on the Cytoplasmic side of the membrane; it reads ESRILSQKIDNELFT. The helical transmembrane segment at 442 to 471 threads the bilayer; the sequence is MMFSGRYIILLMGLFSIYTGLIYNDCFSKA. Over 472-534 the chain is Vacuolar; the sequence is LNLFGSSWSV…ATNKLTFLNS (63 aa). A helical membrane pass occupies residues 535 to 554; it reads FKMKMSVVLGIIHMTFGVAL. Residues 555 to 572 lie on the Cytoplasmic side of the membrane; that stretch reads SLLNHIYFKKPLNIYLGF. Residues 573–593 traverse the membrane as a helical segment; sequence IPEMIFMTTLFGYLVILIIYK. The Vacuolar portion of the chain corresponds to 594 to 638; that stretch reads WCAYDASTSMVAPSLLIHFINMFLFSYQDTSLPMLYKGQMGLQCF. The helical transmembrane segment at 639–658 threads the bilayer; the sequence is LVVCAIICVPWMLVVKPLIL. Over 659–724 the chain is Cytoplasmic; that stretch reads RRQYLRRKHL…DTVVHQAIHT (66 aa). The helical transmembrane segment at 725–749 threads the bilayer; it reads IEYCLGCISNTASYLRLWALSLAHA. Topologically, residues 750 to 770 are vacuolar; that stretch reads QLSEVLWTMVMHVGLSIRSLG. The chain crosses the membrane as a helical span at residues 771 to 809; that stretch reads GGIALVFVFSAFATLTIAILLIMEGLSAFLHALRLHWVE. Over 810 to 837 the chain is Cytoplasmic; it reads FQNKFYMGTGFKFLPFSFENIREGKFDE.

Belongs to the V-ATPase 116 kDa subunit family. V-ATPase is a heteromultimeric enzyme made up of two complexes: the ATP-hydrolytic V1 complex and the proton translocation V0 complex. The V1 complex consists of three catalytic AB heterodimers that form a heterohexamer, three peripheral stalks each consisting of EG heterodimers, one central rotor including subunits D and F, and the regulatory subunits C and H. The proton translocation complex V0 consists of the proton transport subunit a, a ring of proteolipid subunits c9c'', rotary subunit d, subunits e and f, and two accessory subunits.

It localises to the cytoplasmic vesicle. It is found in the clathrin-coated vesicle membrane. The protein localises to the secretory vesicle. Its subcellular location is the synaptic vesicle membrane. The protein resides in the melanosome. In terms of biological role, subunit of the V0 complex of vacuolar(H+)-ATPase (V-ATPase), a multisubunit enzyme composed of a peripheral complex (V1) that hydrolyzes ATP and a membrane integral complex (V0) that translocates protons. V-ATPase is responsible for acidifying and maintaining the pH of intracellular compartments and in some cell types, is targeted to the plasma membrane, where it is responsible for acidifying the extracellular environment. Required for assembly and activity of the vacuolar ATPase. In Xenopus tropicalis (Western clawed frog), this protein is V-type proton ATPase 116 kDa subunit a 1 (atp6v0a1).